Consider the following 161-residue polypeptide: Nucleotide-binding protein Rpic_2826 (161 aa).

This sequence belongs to the YajQ family.

In terms of biological role, nucleotide-binding protein. The chain is Nucleotide-binding protein Rpic_2826 from Ralstonia pickettii (strain 12J).